We begin with the raw amino-acid sequence, 352 residues long: Small ribosomal subunit biogenesis GTPase RsgA (352 aa).

Residues 1-15 (MTKRKLTQNQKRRIH) are compositionally biased toward basic residues. A disordered region spans residues 1–26 (MTKRKLTQNQKRRIHSNNVKALDRHH). Positions 106 to 274 (ENEIARPDYY…LIDSPGIREF (169 aa)) constitute a CP-type G domain. GTP-binding positions include 162-165 (NKVD) and 216-224 (GQSGVGKSS). Residues C298, C303, H305, and C311 each contribute to the Zn(2+) site.

The protein belongs to the TRAFAC class YlqF/YawG GTPase family. RsgA subfamily. As to quaternary structure, monomer. Associates with 30S ribosomal subunit, binds 16S rRNA. Zn(2+) serves as cofactor.

The protein resides in the cytoplasm. Its function is as follows. One of several proteins that assist in the late maturation steps of the functional core of the 30S ribosomal subunit. Helps release RbfA from mature subunits. May play a role in the assembly of ribosomal proteins into the subunit. Circularly permuted GTPase that catalyzes slow GTP hydrolysis, GTPase activity is stimulated by the 30S ribosomal subunit. The polypeptide is Small ribosomal subunit biogenesis GTPase RsgA (Mannheimia succiniciproducens (strain KCTC 0769BP / MBEL55E)).